Here is a 430-residue protein sequence, read N- to C-terminus: Adenylosuccinate synthetase (430 aa).

GTP-binding positions include 12–18 and 40–42; these read GDEGKGK and GHT. The Proton acceptor role is filled by Asp-13. Positions 13 and 40 each coordinate Mg(2+). IMP contacts are provided by residues 13–16, 38–41, Thr-130, Arg-144, Gln-224, Thr-239, and Arg-303; these read DEGK and NAGH. His-41 functions as the Proton donor in the catalytic mechanism. 299-305 lines the substrate pocket; that stretch reads VNTGRKR. GTP contacts are provided by residues Arg-305, 331–333, and 413–415; these read KLD and STS.

Belongs to the adenylosuccinate synthetase family. In terms of assembly, homodimer. Requires Mg(2+) as cofactor.

It localises to the cytoplasm. It catalyses the reaction IMP + L-aspartate + GTP = N(6)-(1,2-dicarboxyethyl)-AMP + GDP + phosphate + 2 H(+). It functions in the pathway purine metabolism; AMP biosynthesis via de novo pathway; AMP from IMP: step 1/2. Its function is as follows. Plays an important role in the de novo pathway of purine nucleotide biosynthesis. Catalyzes the first committed step in the biosynthesis of AMP from IMP. This is Adenylosuccinate synthetase from Rhodopseudomonas palustris (strain ATCC BAA-98 / CGA009).